Here is a 210-residue protein sequence, read N- to C-terminus: MDNDKHLKGTTTVGIVCTDGVVLATEQRATMGHFIASKTAKKIYQIDDLVGMTTAGSVGDAQQIVRIISVESKLFKMRRQESITIKGITTLLSNMLSGQRYYPLMVQLLIGGVDKNGPAIYSLDALGGNIEETRAVSTGSGSPMAYGVLEDRYTEDMTVVEGVDLAIRALHNAMKRDSASGENIDVVVITKDKYERLDPEAVMKKRELLN.

The propeptide at 1–9 (MDNDKHLKG) is removed in mature form; by autocatalysis. Thr-10 (nucleophile) is an active-site residue.

Belongs to the peptidase T1B family. The 20S proteasome core is composed of 14 alpha and 14 beta subunits that assemble into four stacked heptameric rings, resulting in a barrel-shaped structure. The two inner rings, each composed of seven catalytic beta subunits, are sandwiched by two outer rings, each composed of seven alpha subunits. The catalytic chamber with the active sites is on the inside of the barrel. Has a gated structure, the ends of the cylinder being occluded by the N-termini of the alpha-subunits. Is capped at one or both ends by the proteasome regulatory ATPase, PAN.

It is found in the cytoplasm. It carries out the reaction Cleavage of peptide bonds with very broad specificity.. Its activity is regulated as follows. The formation of the proteasomal ATPase PAN-20S proteasome complex, via the docking of the C-termini of PAN into the intersubunit pockets in the alpha-rings, triggers opening of the gate for substrate entry. Interconversion between the open-gate and close-gate conformations leads to a dynamic regulation of the 20S proteasome proteolysis activity. In terms of biological role, component of the proteasome core, a large protease complex with broad specificity involved in protein degradation. In Methanococcoides burtonii (strain DSM 6242 / NBRC 107633 / OCM 468 / ACE-M), this protein is Proteasome subunit beta.